Here is a 244-residue protein sequence, read N- to C-terminus: High frequency lysogenization protein HflD homolog (244 aa).

Belongs to the HflD family.

The protein localises to the cytoplasm. It is found in the cell inner membrane. The chain is High frequency lysogenization protein HflD homolog from Acinetobacter baumannii (strain ATCC 17978 / DSM 105126 / CIP 53.77 / LMG 1025 / NCDC KC755 / 5377).